The sequence spans 62 residues: Calmodulin regulator protein PCP4 (62 aa).

A disordered region spans residues methionine 1 to glutamate 40. Positions glycine 12–glutamate 28 are enriched in basic and acidic residues. The interval glutamate 28–glutamate 40 is acidic; binds calcium and is required for modulating the calcium-binding kinetics of calmodulin. The IQ domain maps to threonine 39 to serine 62.

This sequence belongs to the PCP4 family. As to quaternary structure, binds to both calcium-free and calcium-bound calmodulin. The affinity for the calcium-bound form is 50-fold greater.

In terms of biological role, functions as a modulator of calcium-binding by calmodulin. Thereby, regulates calmodulin activity and the different processes it controls. For instance, may play a role in neuronal differentiation through activation of calmodulin-dependent kinase signaling pathways. The protein is Calmodulin regulator protein PCP4 of Bos taurus (Bovine).